A 215-amino-acid chain; its full sequence is Small ribosomal subunit protein uS7 (215 aa).

The protein belongs to the universal ribosomal protein uS7 family. As to quaternary structure, part of the 30S ribosomal subunit.

One of the primary rRNA binding proteins, it binds directly to 16S rRNA where it nucleates assembly of the head domain of the 30S subunit. Is located at the subunit interface close to the decoding center. This is Small ribosomal subunit protein uS7 from Thermococcus kodakarensis (strain ATCC BAA-918 / JCM 12380 / KOD1) (Pyrococcus kodakaraensis (strain KOD1)).